We begin with the raw amino-acid sequence, 136 residues long: Ribonuclease YqgF (136 aa).

The protein belongs to the YqgF nuclease family. Monomer; also forms low amounts of dimers. Requires Mn(2+) as cofactor.

The protein localises to the cytoplasm. In terms of biological role, has robust sequence-specific RNase activity, acting as a 5'-3' exo/endonuclease on ssRNA substrates with minimally 3 consecutive adenine bases. Has no detectable nuclease activity on dsRNA, dsDNA or Holliday junction DNA. The protein is Ribonuclease YqgF of Deinococcus radiodurans (strain ATCC 13939 / DSM 20539 / JCM 16871 / CCUG 27074 / LMG 4051 / NBRC 15346 / NCIMB 9279 / VKM B-1422 / R1).